We begin with the raw amino-acid sequence, 540 residues long: Probable G-protein coupled receptor 75 (540 aa).

The Extracellular portion of the chain corresponds to 1–46; the sequence is MNTSAPLQNVPNATLLNMPPLHGGNSTSLQEGLRDFIHTATLVTCT. Residues Asn-2 and Asn-25 are each glycosylated (N-linked (GlcNAc...) asparagine). A helical membrane pass occupies residues 47–67; it reads FLLAIIFCLGSYGNFIVFLSF. Topologically, residues 68–86 are cytoplasmic; the sequence is FDPSFRKFRTNFDFMILNL. A helical membrane pass occupies residues 87 to 107; that stretch reads SFCDLFICGVTAPMFTFVLFF. Residues 108–120 lie on the Extracellular side of the membrane; sequence SSASSIPDSFCFT. The helical transmembrane segment at 121–141 threads the bilayer; sequence FHLTSSGFVIMSLKMVAVIAL. Over 142–160 the chain is Cytoplasmic; that stretch reads HRLRMVMGKQPNCTASFSC. The chain crosses the membrane as a helical span at residues 161–181; that stretch reads ILLLTLLLWATSFTLATLATL. At 182 to 205 the chain is on the extracellular side; it reads RTNKSHLCLPMSSLMDGEGKAILS. Asn-184 carries an N-linked (GlcNAc...) asparagine glycan. A helical transmembrane segment spans residues 206-226; it reads LYVVDFTFCVAVVSVSYIMIA. The Cytoplasmic segment spans residues 227-318; it reads QTLRKNAQVK…INFSTAKDSK (92 aa). The chain crosses the membrane as a helical span at residues 319 to 339; sequence AVVTCVVIVLSVLVCCLPLGI. Residues 340 to 350 lie on the Extracellular side of the membrane; sequence SLVQMVLSDNG. A helical transmembrane segment spans residues 351 to 371; the sequence is SFILYQFELFGFTLIFFKSGL. Residues 372-540 lie on the Cytoplasmic side of the membrane; it reads NPFIYSRNSA…SAKQIPIPSV (169 aa). Residues 443–475 form a disordered region; the sequence is DQACGPSHSKESAASPKVSAGHQPCGQSSSTPI.

Belongs to the G-protein coupled receptor 1 family. As to expression, highly expressed in brain and heart. Also detected in skeletal muscle, liver and kidney. Also expressed by islet cells (at protein level).

The protein resides in the cell membrane. Its function is as follows. G protein-coupled receptor that is activated by the chemokine CCL5/RANTES. Probably coupled to heterotrimeric Gq proteins, it stimulates inositol trisphosphate production and calcium mobilization upon activation. Together with CCL5/RANTES, may play a role in neuron survival through activation of a downstream signaling pathway involving the PI3, Akt and MAP kinases. CCL5/RANTES may also regulate insulin secretion by pancreatic islet cells through activation of this receptor. This chain is Probable G-protein coupled receptor 75 (Gpr75), found in Mus musculus (Mouse).